The sequence spans 155 residues: Ribosomal RNA large subunit methyltransferase H 1 (155 aa).

S-adenosyl-L-methionine contacts are provided by residues Leu-76, Gly-108, and 127 to 132 (FSKMTF).

It belongs to the RNA methyltransferase RlmH family. Homodimer.

The protein resides in the cytoplasm. It catalyses the reaction pseudouridine(1915) in 23S rRNA + S-adenosyl-L-methionine = N(3)-methylpseudouridine(1915) in 23S rRNA + S-adenosyl-L-homocysteine + H(+). Its function is as follows. Specifically methylates the pseudouridine at position 1915 (m3Psi1915) in 23S rRNA. In Thermoanaerobacter pseudethanolicus (strain ATCC 33223 / 39E) (Clostridium thermohydrosulfuricum), this protein is Ribosomal RNA large subunit methyltransferase H 1.